Here is a 101-residue protein sequence, read N- to C-terminus: Putative antitoxin HigA2 (101 aa).

The HTH cro/C1-type domain occupies 35-90; sequence LRELRAAQSLTQVQVAALAHIRQSRVSSIENGDIGSAQVNTLRKYVSALGGELDIT. The segment at residues 46 to 65 is a DNA-binding region (H-T-H motif); that stretch reads QVQVAALAHIRQSRVSSIEN.

Its function is as follows. Putative antitoxin component of a type II toxin-antitoxin (TA) system. Its cognate toxin would be HigB2. The chain is Putative antitoxin HigA2 from Mycobacterium tuberculosis (strain ATCC 25618 / H37Rv).